Here is a 264-residue protein sequence, read N- to C-terminus: GTP cyclohydrolase FolE2 (264 aa).

The protein belongs to the GTP cyclohydrolase IV family.

It catalyses the reaction GTP + H2O = 7,8-dihydroneopterin 3'-triphosphate + formate + H(+). Its pathway is cofactor biosynthesis; 7,8-dihydroneopterin triphosphate biosynthesis; 7,8-dihydroneopterin triphosphate from GTP: step 1/1. In terms of biological role, converts GTP to 7,8-dihydroneopterin triphosphate. This chain is GTP cyclohydrolase FolE2, found in Akkermansia muciniphila (strain ATCC BAA-835 / DSM 22959 / JCM 33894 / BCRC 81048 / CCUG 64013 / CIP 107961 / Muc).